A 148-amino-acid polypeptide reads, in one-letter code: 3-hydroxyacyl-[acyl-carrier-protein] dehydratase FabZ (148 aa).

The active site involves histidine 55.

This sequence belongs to the thioester dehydratase family. FabZ subfamily.

Its subcellular location is the cytoplasm. The catalysed reaction is a (3R)-hydroxyacyl-[ACP] = a (2E)-enoyl-[ACP] + H2O. In terms of biological role, involved in unsaturated fatty acids biosynthesis. Catalyzes the dehydration of short chain beta-hydroxyacyl-ACPs and long chain saturated and unsaturated beta-hydroxyacyl-ACPs. This chain is 3-hydroxyacyl-[acyl-carrier-protein] dehydratase FabZ, found in Haemophilus influenzae (strain ATCC 51907 / DSM 11121 / KW20 / Rd).